We begin with the raw amino-acid sequence, 257 residues long: Snake venom serine protease 3 (257 aa).

The first 18 residues, 1–18, serve as a signal peptide directing secretion; that stretch reads MVLIRVLANLLILQLSYA. Residues 19–24 constitute a propeptide that is removed on maturation; it reads QKSSEL. Positions 25–248 constitute a Peptidase S1 domain; it reads VIGGDECNIN…YTDWIQNIIA (224 aa). Disulfide bonds link cysteine 31–cysteine 163, cysteine 50–cysteine 66, cysteine 98–cysteine 255, cysteine 142–cysteine 209, cysteine 174–cysteine 188, and cysteine 199–cysteine 224. N-linked (GlcNAc...) asparagine glycosylation occurs at asparagine 44. Histidine 65 acts as the Charge relay system in catalysis. N-linked (GlcNAc...) asparagine glycosylation occurs at asparagine 103. Aspartate 110 serves as the catalytic Charge relay system. Residues asparagine 117 and asparagine 154 are each glycosylated (N-linked (GlcNAc...) asparagine). Catalysis depends on serine 203, which acts as the Charge relay system. N-linked (GlcNAc...) asparagine glycosylation is present at asparagine 250.

This sequence belongs to the peptidase S1 family. Snake venom subfamily. As to quaternary structure, monomer. In terms of tissue distribution, expressed by the venom gland.

The protein localises to the secreted. In terms of biological role, snake venom serine protease that may act in the hemostasis system of the prey. The sequence is that of Snake venom serine protease 3 (TLF3) from Protobothrops flavoviridis (Habu).